A 224-amino-acid chain; its full sequence is Zinc finger protein 22 (224 aa).

Residues 1-34 (MRLAKPKAGISRSSSQGKAYENKRKTGRQRQKWG) form a disordered region. Lysine 18 and lysine 23 each carry N6-acetyllysine. A Phosphoserine modification is found at serine 49. C2H2-type zinc fingers lie at residues 55–77 (YKCTECEKSFSQSSTLFQHQKIH), 83–105 (HKCADCGKSFFQSSNLIQHRRIH), 111–133 (YKCDECGESFKQSSNLIQHQRIH), 139–161 (YQCDECGRCFSQSSHLIQHQRTH), and 167–189 (YQCSECGKCFSQSSHLRQHMKVH).

Belongs to the krueppel C2H2-type zinc-finger protein family. In the embryo, expressed in developing craniofacial structures including dental epithelium of maxillary molar tooth organs, tongue epithelium and muscle, and craniofacial bone osteoblasts. In the adult, expressed in mesoderm-derived tissues such as skeletal muscle, heart, kidney and liver. Intermediate expression in spleen, thymus and brain. Low levels in endoderm-derived tissues such as intestine and colon.

The protein resides in the nucleus. Functionally, binds DNA through the consensus sequence 5'-CAATG-3'. May be involved in transcriptional regulation and may play a role in tooth formation. In Homo sapiens (Human), this protein is Zinc finger protein 22 (ZNF22).